The sequence spans 327 residues: Phenylalanine--tRNA ligase alpha subunit (327 aa).

Position 252 (glutamate 252) interacts with Mg(2+).

This sequence belongs to the class-II aminoacyl-tRNA synthetase family. Phe-tRNA synthetase alpha subunit type 1 subfamily. In terms of assembly, tetramer of two alpha and two beta subunits. Mg(2+) is required as a cofactor.

Its subcellular location is the cytoplasm. It catalyses the reaction tRNA(Phe) + L-phenylalanine + ATP = L-phenylalanyl-tRNA(Phe) + AMP + diphosphate + H(+). This Shewanella denitrificans (strain OS217 / ATCC BAA-1090 / DSM 15013) protein is Phenylalanine--tRNA ligase alpha subunit.